We begin with the raw amino-acid sequence, 233 residues long: Ycf53-like protein (233 aa).

It belongs to the ycf53 family.

This is Ycf53-like protein from Synechocystis sp. (strain ATCC 27184 / PCC 6803 / Kazusa).